A 238-amino-acid polypeptide reads, in one-letter code: tRNA (guanine-N(7)-)-methyltransferase (238 aa).

Glu70, Asp95, Asp122, and Asp145 together coordinate S-adenosyl-L-methionine. Asp145 is a catalytic residue. Residues Lys149, Asp181, and Thr216–Glu219 contribute to the substrate site.

The protein belongs to the class I-like SAM-binding methyltransferase superfamily. TrmB family.

The catalysed reaction is guanosine(46) in tRNA + S-adenosyl-L-methionine = N(7)-methylguanosine(46) in tRNA + S-adenosyl-L-homocysteine. It functions in the pathway tRNA modification; N(7)-methylguanine-tRNA biosynthesis. In terms of biological role, catalyzes the formation of N(7)-methylguanine at position 46 (m7G46) in tRNA. This is tRNA (guanine-N(7)-)-methyltransferase from Neisseria meningitidis serogroup A / serotype 4A (strain DSM 15465 / Z2491).